Here is a 381-residue protein sequence, read N- to C-terminus: L-lactate dehydrogenase (381 aa).

One can recognise an FMN hydroxy acid dehydrogenase domain in the interval 1 to 380 (MIISSASDYR…KPEALVDLSK (380 aa)). Tyr24 contacts substrate. Residues Ser106 and Gln127 each coordinate FMN. Tyr129 lines the substrate pocket. Thr155 lines the FMN pocket. Residue Arg164 participates in substrate binding. FMN is bound at residue Lys251. The active-site Proton acceptor is His275. Arg278 serves as a coordination point for substrate. 306–330 (DSGIRNGLDIVRMLALGADATMLGR) is a binding site for FMN.

Belongs to the FMN-dependent alpha-hydroxy acid dehydrogenase family. It depends on FMN as a cofactor.

Its subcellular location is the cell inner membrane. It catalyses the reaction (S)-lactate + A = pyruvate + AH2. Functionally, catalyzes the conversion of L-lactate to pyruvate. Is coupled to the respiratory chain. The chain is L-lactate dehydrogenase from Haemophilus influenzae (strain PittEE).